The primary structure comprises 274 residues: Large ribosomal subunit protein uL2 (274 aa).

The tract at residues 228 to 254 is disordered; sequence VDHPMGGGEGRASGGHPRSRKGLYAKG. The segment covering 244-254 has biased composition (basic residues); it reads PRSRKGLYAKG.

This sequence belongs to the universal ribosomal protein uL2 family. In terms of assembly, part of the 50S ribosomal subunit. Forms a bridge to the 30S subunit in the 70S ribosome.

In terms of biological role, one of the primary rRNA binding proteins. Required for association of the 30S and 50S subunits to form the 70S ribosome, for tRNA binding and peptide bond formation. It has been suggested to have peptidyltransferase activity; this is somewhat controversial. Makes several contacts with the 16S rRNA in the 70S ribosome. The protein is Large ribosomal subunit protein uL2 of Azobacteroides pseudotrichonymphae genomovar. CFP2.